A 384-amino-acid polypeptide reads, in one-letter code: Probable protein phosphatase 2C 42 (384 aa).

In terms of domain architecture, PPM-type phosphatase spans 58–358 (DFSMAVIQAN…DDITVIVVFL (301 aa)). Residues D89, G90, D290, and D349 each contribute to the Mn(2+) site.

It belongs to the PP2C family. Requires Mg(2+) as cofactor. The cofactor is Mn(2+).

It carries out the reaction O-phospho-L-seryl-[protein] + H2O = L-seryl-[protein] + phosphate. It catalyses the reaction O-phospho-L-threonyl-[protein] + H2O = L-threonyl-[protein] + phosphate. Functionally, dephosphorylates and represses plasma membrane H(+)-ATPases (PM H(+)-ATPases, e.g. AHA1 and AHA2), thus influencing negatively plant growth and fitness. Promotes the apical hook maintenance of etiolated seedlings. The protein is Probable protein phosphatase 2C 42 of Arabidopsis thaliana (Mouse-ear cress).